Reading from the N-terminus, the 151-residue chain is Zinc finger HIT domain-containing protein 3 (151 aa).

Residues cysteine 11, cysteine 14, cysteine 22, cysteine 25, cysteine 30, cysteine 34, histidine 38, and cysteine 42 each contribute to the Zn(2+) site. The HIT-type zinc finger occupies 11 to 42 (CVVCLEKPKYRCPTCRVPYCSVPCFQKHKEQC). Residues 43–53 (SSEARPVEKRR) are compositionally biased toward basic and acidic residues. The disordered stretch occupies residues 43–81 (SSEARPVEKRRAGPPVRSEESKDDDSSVADFLNSDEEED). Over residues 63–81 (SKDDDSSVADFLNSDEEED) the composition is skewed to acidic residues. Residue serine 76 is modified to Phosphoserine.

In terms of assembly, thyroid receptor interacting proteins (TRIPs) specifically interact with the ligand binding domain of the thyroid receptor (TR). Requires the presence of thyroid hormone for its interaction. Interacts with NUFIP1. Interacts (via HIT-type zinc finger) with the RUVBL1/RUVBL2 complex in the presence of ADP. As to expression, expressed in the cerebellum.

It is found in the cytoplasm. The protein localises to the nucleus. This chain is Zinc finger HIT domain-containing protein 3 (Znhit3), found in Mus musculus (Mouse).